A 291-amino-acid chain; its full sequence is 33 kDa chaperonin (291 aa).

Disulfide bonds link C235–C237 and C268–C271.

The protein belongs to the HSP33 family. In terms of processing, under oxidizing conditions two disulfide bonds are formed involving the reactive cysteines. Under reducing conditions zinc is bound to the reactive cysteines and the protein is inactive.

Its subcellular location is the cytoplasm. In terms of biological role, redox regulated molecular chaperone. Protects both thermally unfolding and oxidatively damaged proteins from irreversible aggregation. Plays an important role in the bacterial defense system toward oxidative stress. This Bacillus subtilis (strain 168) protein is 33 kDa chaperonin.